Here is a 669-residue protein sequence, read N- to C-terminus: Phosphatidylinositol-3-phosphate phosphatase MTMR1 (669 aa).

At M1 the chain carries N-acetylmethionine. Positions 1–17 (MDRPVAAAAAASAASCE) are enriched in low complexity. A disordered region spans residues 1-55 (MDRPVAAAAAASAASCEGAGGPGPGPGASWRPSRVAGGASASSRHPSIETLDSPT). S47 and S53 each carry phosphoserine. The region spanning 94–165 (NKLAQMEEAP…GVISRVEKIG (72 aa)) is the GRAM domain. Residues 230–605 (GWKVYDPVSE…SHLELWVNYY (376 aa)) enclose the Myotubularin phosphatase domain. A 1,2-diacyl-sn-glycero-3-phospho-(1D-myo-inositol-3-phosphate) is bound by residues N355, N380, and I381. Catalysis depends on C442, which acts as the Phosphocysteine intermediate. 7 residues coordinate a 1,2-diacyl-sn-glycero-3-phospho-(1D-myo-inositol-3-phosphate): S443, D444, G445, W446, D447, R448, and R488. Phosphate is bound at residue S443. Phosphate is bound by residues G445, W446, D447, and R448. The tract at residues 612–669 (MRPQMPIHQNLKELLAIKAELQKRVEDLQREMATRTISSSSERGSSPTHSATPVHTSV) is required for dimerization. The segment at 644-669 (ATRTISSSSERGSSPTHSATPVHTSV) is disordered. Residues 649-661 (SSSSERGSSPTHS) show a composition bias toward low complexity.

The protein belongs to the protein-tyrosine phosphatase family. Non-receptor class myotubularin subfamily. In terms of assembly, homodimer. Widely expressed. Detected in skeletal muscle, heart, lung, liver and brain.

Its subcellular location is the cell membrane. The protein localises to the cytoplasm. The enzyme catalyses a 1,2-diacyl-sn-glycero-3-phospho-(1D-myo-inositol-3-phosphate) + H2O = a 1,2-diacyl-sn-glycero-3-phospho-(1D-myo-inositol) + phosphate. It carries out the reaction 1,2-dioctanoyl-sn-glycero-3-phospho-(1-D-myo-inositol-3-phosphate) + H2O = 1,2-dioctanoyl-sn-glycero-3-phospho-(1D-myo-inositol) + phosphate. The catalysed reaction is a 1,2-diacyl-sn-glycero-3-phospho-(1D-myo-inositol-3,5-bisphosphate) + H2O = a 1,2-diacyl-sn-glycero-3-phospho-(1D-myo-inositol-5-phosphate) + phosphate. Its function is as follows. Lipid phosphatase that specifically dephosphorylates the D-3 position of phosphatidylinositol 3-phosphate, generating phosphatidylinositol. Could also dephosphorylate phosphatidylinositol 3,5-bisphosphate to produce phosphatidylinositol 5-phosphate. This is Phosphatidylinositol-3-phosphate phosphatase MTMR1 from Mus musculus (Mouse).